A 463-amino-acid polypeptide reads, in one-letter code: Lysosomal proton-coupled steroid conjugate and bile acid symporter SLC46A3 (463 aa).

The N-terminal stretch at 1 to 20 (MKILFVEPAIFLSAFAMTLT) is a signal peptide. At 21-73 (SPLTTQYVYRRIWEETGNYTFSSDSNISECEKNKSSPIFAFQEEVQKKVSRFN) the chain is on the extracellular side. N-linked (GlcNAc...) asparagine glycosylation is found at Asn-38, Asn-46, and Asn-53. Residues 74-94 (LQMDISGLIPGLVSTFILLSI) traverse the membrane as a helical segment. Residues 95 to 101 (SDHYGRK) lie on the Cytoplasmic side of the membrane. The helical transmembrane segment at 102-124 (FPMILSSVGALATSVWLCLLCYF) threads the bilayer. The Extracellular segment spans residues 125 to 133 (AFPFQLLIA). The helical transmembrane segment at 134 to 156 (STFIGAFCGNYTTFWGACFAYIV) threads the bilayer. The Cytoplasmic portion of the chain corresponds to 157-170 (DQCKEHKQKTIRIA). The chain crosses the membrane as a helical span at residues 171–191 (VIDFLLGLVTGLTGLSSGYFI). Over 192-197 (RELGFG) the chain is Extracellular. The chain crosses the membrane as a helical span at residues 198–218 (WSFLIIAASLAVNLIYILFFL). At 219 to 261 (GDPVKECSSQNVTMSCSEGFKNLFYRTYMLFKNASGKRRFLLC) the chain is on the cytoplasmic side. A helical transmembrane segment spans residues 262 to 282 (LLLFTTITYFFVVIGIAPIFI). The Extracellular portion of the chain corresponds to 283–294 (LYELDSPLCWNE). A helical transmembrane segment spans residues 295 to 315 (VFIGYGSALGSASFLTSFLGI). Residues 316 to 324 (WLFSYCMED) lie on the Cytoplasmic side of the membrane. Residues 325 to 345 (IHMAFIGIFTTMTGMVMTAFA) traverse the membrane as a helical segment. At 346 to 347 (ST) the chain is on the extracellular side. Residues 348 to 368 (TLMMFLARVPFLFTIVPFSVL) form a helical membrane-spanning segment. Over 369–382 (RSMLSKVVRSTEQG) the chain is Cytoplasmic. The chain crosses the membrane as a helical span at residues 383–403 (ILFACIAFLETLGGVTAVSTF). Topologically, residues 404–415 (NGIYSATVAWYP) are extracellular. A helical transmembrane segment spans residues 416–436 (GFTFLLSAGLLLLPAISLCVV). Over 437-463 (KCTSWNEGSYELLIQEESSEDASDRAC) the chain is Cytoplasmic. Residues 446–449 (YELL) carry the Tyrosine-based lysosomal-sorting motif motif.

It belongs to the major facilitator superfamily. SLC46A family.

It is found in the lysosome membrane. The catalysed reaction is estrone 3-sulfate(out) + n H(+)(out) = estrone 3-sulfate(in) + n H(+)(in). The enzyme catalyses 25-hydroxyvitamin D3 sulfate(out) + n H(+)(out) = 25-hydroxyvitamin D3 sulfate(in) + n H(+)(in). It catalyses the reaction cholate(out) + n H(+)(out) = cholate(in) + n H(+)(in). It carries out the reaction glycocholate(out) + n H(+)(out) = glycocholate(in) + n H(+)(in). The catalysed reaction is taurocholate(out) + n H(+)(out) = taurocholate(in) + n H(+)(in). The enzyme catalyses dehydroepiandrosterone 3-sulfate(out) + n H(+)(out) = dehydroepiandrosterone 3-sulfate(in) + n H(+)(in). It catalyses the reaction N-acetyl-D-muramoyl-L-alanyl-D-isoglutamine(out) + n H(+)(out) = N-acetyl-D-muramoyl-L-alanyl-D-isoglutamine(in) + n H(+)(in). It carries out the reaction 2',3'-cGAMP(out) + n H(+)(out) = 2',3'-cGAMP(in) + n H(+)(in). Its function is as follows. Lysosomal proton-coupled steroid conjugate and bile acid transporter. Preferentially recognizes lipophilic steroid conjugates or bile acis as endogenous substrates and seems to mediate escape from lysosomes to the cytoplasm. Modulates hepatic cytosolic copper homeostasis, maybe acting as a lysosomal copper transporter and sequestering copper ions in the lysosome. Delivers pathogen-associated molecular patterns to cytosolic pattern recognition receptors as part of the innate immune response to microbes. Selectively transports bacterial muramyl dipeptide (MDP) into the cytosol for recognition by NOD2, triggering inflammatory responses. Likely acts as a redundant importer of cyclic GMP-AMP dinucleotides (cGAMPs) in monocyte and macrophage cell lineages. The transport mechanism, its electrogenicity and stoichiometry remain to be elucidated. This is Lysosomal proton-coupled steroid conjugate and bile acid symporter SLC46A3 (SLC46A3) from Pongo abelii (Sumatran orangutan).